Here is a 280-residue protein sequence, read N- to C-terminus: Large ribosomal subunit protein uL2 (280 aa).

Disordered stretches follow at residues 1 to 58 (MAIR…GGGH) and 226 to 280 (MNPV…KHGR). 2 stretches are compositionally biased toward basic residues: residues 37-58 (LHGH…GGGH) and 268-280 (IVRR…KHGR).

This sequence belongs to the universal ribosomal protein uL2 family. In terms of assembly, part of the 50S ribosomal subunit. Forms a bridge to the 30S subunit in the 70S ribosome.

In terms of biological role, one of the primary rRNA binding proteins. Required for association of the 30S and 50S subunits to form the 70S ribosome, for tRNA binding and peptide bond formation. It has been suggested to have peptidyltransferase activity; this is somewhat controversial. Makes several contacts with the 16S rRNA in the 70S ribosome. The protein is Large ribosomal subunit protein uL2 of Mycolicibacterium paratuberculosis (strain ATCC BAA-968 / K-10) (Mycobacterium paratuberculosis).